A 458-amino-acid chain; its full sequence is Alpha-1,3/1,6-mannosyltransferase ALG2 (458 aa).

Asn57 and Asn169 each carry an N-linked (GlcNAc...) asparagine glycan. Residues 438 to 458 (NISIIYVVSIIFAVLLKVFVF) traverse the membrane as a helical segment.

Belongs to the glycosyltransferase group 1 family.

The protein resides in the endoplasmic reticulum membrane. It carries out the reaction a beta-D-Man-(1-&gt;4)-beta-D-GlcNAc-(1-&gt;4)-alpha-D-GlcNAc-diphospho-di-trans,poly-cis-dolichol + GDP-alpha-D-mannose = an alpha-D-Man-(1-&gt;3)-beta-D-Man-(1-&gt;4)-beta-D-GlcNAc-(1-&gt;4)-alpha-D-GlcNAc-diphospho-di-trans,poly-cis-dolichol + GDP + H(+). The enzyme catalyses an alpha-D-Man-(1-&gt;3)-beta-D-Man-(1-&gt;4)-beta-D-GlcNAc-(1-&gt;4)-alpha-D-GlcNAc-diphospho-di-trans,poly-cis-dolichol + GDP-alpha-D-mannose = an alpha-D-Man-(1-&gt;3)-[alpha-D-Man-(1-&gt;6)]-beta-D-Man-(1-&gt;4)-beta-D-GlcNAc-(1-&gt;4)-alpha-D-GlcNAc-diphospho-di-trans,poly-cis-dolichol + GDP + H(+). Its pathway is protein modification; protein glycosylation. Functionally, mannosylates Man(2)GlcNAc(2)-dolichol diphosphate and Man(1)GlcNAc(2)-dolichol diphosphate to form Man(3)GlcNAc(2)-dolichol diphosphate. This chain is Alpha-1,3/1,6-mannosyltransferase ALG2 (ALG2), found in Candida glabrata (strain ATCC 2001 / BCRC 20586 / JCM 3761 / NBRC 0622 / NRRL Y-65 / CBS 138) (Yeast).